The primary structure comprises 493 residues: ATP synthase subunit beta 3 (493 aa).

Residues 113 to 138 (VPGDNGTPLPPGTPRRPIHRKPPPLA) form a disordered region. 170–177 (GGAGVGKT) contributes to the ATP binding site.

The protein belongs to the ATPase alpha/beta chains family. In terms of assembly, F-type ATPases have 2 components, CF(1) - the catalytic core - and CF(0) - the membrane proton channel. CF(1) has five subunits: alpha(3), beta(3), gamma(1), delta(1), epsilon(1). CF(0) has three main subunits: a(1), b(2) and c(9-12). The alpha and beta chains form an alternating ring which encloses part of the gamma chain. CF(1) is attached to CF(0) by a central stalk formed by the gamma and epsilon chains, while a peripheral stalk is formed by the delta and b chains.

It is found in the cell inner membrane. The catalysed reaction is ATP + H2O + 4 H(+)(in) = ADP + phosphate + 5 H(+)(out). Produces ATP from ADP in the presence of a proton gradient across the membrane. The catalytic sites are hosted primarily by the beta subunits. This chain is ATP synthase subunit beta 3, found in Paraburkholderia xenovorans (strain LB400).